A 356-amino-acid polypeptide reads, in one-letter code: Dual-specificity RNA methyltransferase RlmN (356 aa).

The active-site Proton acceptor is the Glu89. The Radical SAM core domain occupies 108–341 (SHARYTICVS…CTIRESKGLD (234 aa)). Cysteines 115 and 346 form a disulfide. Residues Cys122, Cys126, and Cys129 each coordinate [4Fe-4S] cluster. Residues 172 to 173 (GE), Ser204, 227 to 229 (SLH), and Asn303 each bind S-adenosyl-L-methionine. The S-methylcysteine intermediate role is filled by Cys346.

The protein belongs to the radical SAM superfamily. RlmN family. Requires [4Fe-4S] cluster as cofactor.

It is found in the cytoplasm. The enzyme catalyses adenosine(2503) in 23S rRNA + 2 reduced [2Fe-2S]-[ferredoxin] + 2 S-adenosyl-L-methionine = 2-methyladenosine(2503) in 23S rRNA + 5'-deoxyadenosine + L-methionine + 2 oxidized [2Fe-2S]-[ferredoxin] + S-adenosyl-L-homocysteine. It carries out the reaction adenosine(37) in tRNA + 2 reduced [2Fe-2S]-[ferredoxin] + 2 S-adenosyl-L-methionine = 2-methyladenosine(37) in tRNA + 5'-deoxyadenosine + L-methionine + 2 oxidized [2Fe-2S]-[ferredoxin] + S-adenosyl-L-homocysteine. In terms of biological role, specifically methylates position 2 of adenine 2503 in 23S rRNA and position 2 of adenine 37 in tRNAs. m2A2503 modification seems to play a crucial role in the proofreading step occurring at the peptidyl transferase center and thus would serve to optimize ribosomal fidelity. This Campylobacter jejuni (strain RM1221) protein is Dual-specificity RNA methyltransferase RlmN.